We begin with the raw amino-acid sequence, 193 residues long: CASP-like protein 1D1 (193 aa).

The disordered stretch occupies residues methionine 1–lysine 24. At methionine 1–glutamine 30 the chain is on the cytoplasmic side. The span at serine 14–lysine 24 shows a compositional bias: polar residues. A helical transmembrane segment spans residues valine 31–serine 51. The Extracellular segment spans residues lysine 52–alanine 76. A helical membrane pass occupies residues leucine 77 to valine 97. Topologically, residues threonine 98–serine 108 are cytoplasmic. Residues alanine 109–alanine 129 form a helical membrane-spanning segment. Over threonine 130–histidine 162 the chain is Extracellular. Residues valine 163–isoleucine 183 traverse the membrane as a helical segment. Over serine 184–arginine 193 the chain is Cytoplasmic.

This sequence belongs to the Casparian strip membrane proteins (CASP) family. In terms of assembly, homodimer and heterodimers.

It localises to the cell membrane. This chain is CASP-like protein 1D1, found in Arabidopsis thaliana (Mouse-ear cress).